We begin with the raw amino-acid sequence, 341 residues long: tRNA N6-adenosine threonylcarbamoyltransferase (341 aa).

The Fe cation site is built by His-111 and His-115. Substrate-binding positions include 134 to 138, Asp-167, Gly-180, and Asn-276; that span reads LVSGG. Position 304 (Asp-304) interacts with Fe cation.

The protein belongs to the KAE1 / TsaD family. The cofactor is Fe(2+).

It is found in the cytoplasm. The enzyme catalyses L-threonylcarbamoyladenylate + adenosine(37) in tRNA = N(6)-L-threonylcarbamoyladenosine(37) in tRNA + AMP + H(+). Required for the formation of a threonylcarbamoyl group on adenosine at position 37 (t(6)A37) in tRNAs that read codons beginning with adenine. Is involved in the transfer of the threonylcarbamoyl moiety of threonylcarbamoyl-AMP (TC-AMP) to the N6 group of A37, together with TsaE and TsaB. TsaD likely plays a direct catalytic role in this reaction. The protein is tRNA N6-adenosine threonylcarbamoyltransferase of Pseudomonas fluorescens (strain SBW25).